Reading from the N-terminus, the 363-residue chain is Phospho-N-acetylmuramoyl-pentapeptide-transferase (363 aa).

The next 10 helical transmembrane spans lie at 3-23 (QILFAGVIGLFLTLVGTPLLI), 48-68 (GTPTMGGIAFILATVAAYFLA), 83-103 (PTFSGLLVLGLMVGMGLVGFL), 121-141 (AKMIGQLTVGIAFAVLSLQFA), 159-179 (FGWTIGPVLFVVWALFMILAM), 192-212 (LATGASVLVFGAYTFIGVWQF), 234-254 (PLDLAVVASALMGSCLGFLWW), 261-281 (IFMGDTGSLALGGVLAGLAIC), 286-306 (LLMAILGGLFVLITMSVVIQV), and 340-360 (FWIIQGICVIVGLGLFYAGWA).

The protein belongs to the glycosyltransferase 4 family. MraY subfamily. The cofactor is Mg(2+).

It localises to the cell membrane. It carries out the reaction UDP-N-acetyl-alpha-D-muramoyl-L-alanyl-gamma-D-glutamyl-meso-2,6-diaminopimeloyl-D-alanyl-D-alanine + di-trans,octa-cis-undecaprenyl phosphate = di-trans,octa-cis-undecaprenyl diphospho-N-acetyl-alpha-D-muramoyl-L-alanyl-D-glutamyl-meso-2,6-diaminopimeloyl-D-alanyl-D-alanine + UMP. The protein operates within cell wall biogenesis; peptidoglycan biosynthesis. In terms of biological role, catalyzes the initial step of the lipid cycle reactions in the biosynthesis of the cell wall peptidoglycan: transfers peptidoglycan precursor phospho-MurNAc-pentapeptide from UDP-MurNAc-pentapeptide onto the lipid carrier undecaprenyl phosphate, yielding undecaprenyl-pyrophosphoryl-MurNAc-pentapeptide, known as lipid I. The chain is Phospho-N-acetylmuramoyl-pentapeptide-transferase from Streptomyces coelicolor (strain ATCC BAA-471 / A3(2) / M145).